Here is a 494-residue protein sequence, read N- to C-terminus: Aldehyde dehydrogenase (494 aa).

223–228 (GSTTAG) provides a ligand contact to NAD(+). Catalysis depends on residues Glu-245 and Cys-279.

Belongs to the aldehyde dehydrogenase family.

The catalysed reaction is an aldehyde + NAD(+) + H2O = a carboxylate + NADH + 2 H(+). It functions in the pathway mycotoxin biosynthesis. Its function is as follows. Aldehyde dehydrogenase; part of the gene cluster that mediates the biosynthesis of the selective antifungal agent ascochitine, an o-quinone methide that plays a possible protective role against other microbial competitors in nature and is considered to be important for pathogenicity of legume-associated Didymella species. The pathway probably begins with the synthesis of a keto-aldehyde intermediate by the ascochitine non-reducing polyketide synthase pksAC from successive condensations of 4 malonyl-CoA units, presumably with a simple acetyl-CoA starter unit. Release of the keto-aldehyde intermediate is consistent with the presence of the C-terminal reductive release domain. The HR-PKS (orf7) probably makes a diketide starter unit which is passed to the non-reducing polyketide synthase pksAC for further extension, producing ascochital and ascochitine. The aldehyde dehydrogenase (orf1), the 2-oxoglutarate-dependent dioxygenase (orf3) and the dehydrogenase (orf9) are probably involved in subsequent oxidations of methyl groups to the carboxylic acid of the heterocyclic ring. The ascochitine gene cluster also includes a gene encoding a short peptide with a cupin domain (orf2) that is often found in secondary metabolite gene clusters and which function has still to be determined. The chain is Aldehyde dehydrogenase from Didymella fabae (Leaf and pod spot disease fungus).